We begin with the raw amino-acid sequence, 272 residues long: MCTTAWATAQPVIKPPKGRIAIIADGNSPDPDDLGGTAISLALLRATSLESRLVHYSHSCDLVRVNRISEAAEYERHAMMQTACDGTARRWGGFENLTFFDAKWQLDETIKDLSKAINASSAEDPLWIIEAGEPDIIGFALAASEKEKHQYVKVVTHHPANDDAGDFYTWQSILDFGVEEVRIPDQNINLKVDESEWDWAKNHSDDRMKFVWLMGKMAEVDDVVKFQKGKWDCSDAGMVLYWITGATNGGVKQGSVTQVKTILEGFLSQNNN.

It localises to the periplasm. May be involved in ulvan degradation. Ulvan is the main polysaccharide component of the Ulvales (green seaweed) cell wall. It is composed of disaccharide building blocks comprising 3-sulfated rhamnose (Rha3S) linked to D-glucuronic acid (GlcA), L-iduronic acid (IduA), or D-xylose (Xyl). This is an uncharacterized protein from Formosa agariphila (strain DSM 15362 / KCTC 12365 / LMG 23005 / KMM 3901 / M-2Alg 35-1).